An 88-amino-acid polypeptide reads, in one-letter code: Small ribosomal subunit protein uS15 (88 aa).

It belongs to the universal ribosomal protein uS15 family. In terms of assembly, part of the 30S ribosomal subunit. Forms a bridge to the 50S subunit in the 70S ribosome, contacting the 23S rRNA.

In terms of biological role, one of the primary rRNA binding proteins, it binds directly to 16S rRNA where it helps nucleate assembly of the platform of the 30S subunit by binding and bridging several RNA helices of the 16S rRNA. Forms an intersubunit bridge (bridge B4) with the 23S rRNA of the 50S subunit in the ribosome. The polypeptide is Small ribosomal subunit protein uS15 (Geobacter metallireducens (strain ATCC 53774 / DSM 7210 / GS-15)).